A 630-amino-acid chain; its full sequence is Probable potassium transport system protein Kup (630 aa).

Transmembrane regions (helical) follow at residues 17-37 (LAIAAIGVVFGDIGTSPLYSL), 51-71 (PSAILGVISLLFWAIILVVGI), 105-125 (ITGLMMALGIFGACMFYGDAV), 144-164 (PQLSHLVLPITIVILIALFWI), 175-195 (LFGPIMVLWFVTIAVLGIYHI), 218-238 (VLLAYVVLGSVVLVLTGAEAL), 255-275 (YVLVMPSLVLNYFGQGALLLL), 283-303 (PFFLLAPQWAALPLVVLSTVA), 344-364 (IYVPVVNWLLLFVILCIVIGF), 374-394 (YGIAVTATMVITTILAAVVMV), 402-422 (LLVAMIIGVFLVIDLGFFGAN), and 428-448 (QGGWLPLGIGALLFFLLMTWY).

The protein belongs to the HAK/KUP transporter (TC 2.A.72) family.

The protein resides in the cell inner membrane. It catalyses the reaction K(+)(in) + H(+)(in) = K(+)(out) + H(+)(out). Transport of potassium into the cell. Likely operates as a K(+):H(+) symporter. This is Probable potassium transport system protein Kup from Burkholderia pseudomallei (strain K96243).